We begin with the raw amino-acid sequence, 446 residues long: MSKEYLTVSALTKYLHTKFTRDPYLRRVYLTGEISNFRRRATHQYFSLKDDNAVISVMMFQSAFSKIKFEPEKGMKVLVSGRVDLYEKSGRYQIIIDTMQPDGVGALYQAYEQLVKKLRIEGLFNEELKKPLVKYPKRIAVITSPSGAVIRDIITTTHRRYPIAQLVLFPAVVQGDDAADSLVGRLKQVNEEGNFDTIIIGRGGGSIEDLWPFNEEKVARAISDSKIPVISSVGHETDTTIADLVADVRAATPTAAAELATPVLSEEIVKIKQYRLRIIQVLKNKISNYQQILDKVCSSYILQQPDRLYTGYAQNLDSLINRKNQAFKNLVYQNEKQLQLLESNLQHNNPSIRIKDEKNNLQQLLEKMHLGMLGVFNDKSYKLEKLMSSLDMLSPLKVMNRGYSYILKDGKTVKNVKSLQPNDDVTLYFENGSAEARITKIREEKE.

The protein belongs to the XseA family. Heterooligomer composed of large and small subunits.

The protein localises to the cytoplasm. The enzyme catalyses Exonucleolytic cleavage in either 5'- to 3'- or 3'- to 5'-direction to yield nucleoside 5'-phosphates.. In terms of biological role, bidirectionally degrades single-stranded DNA into large acid-insoluble oligonucleotides, which are then degraded further into small acid-soluble oligonucleotides. This chain is Exodeoxyribonuclease 7 large subunit, found in Ligilactobacillus salivarius (strain UCC118) (Lactobacillus salivarius).